The primary structure comprises 465 residues: MTIHIYNTLTRQKEEFIPLEENKVKMYVCGPTVYNYIHIGNARPPMVFDTVRRYLEYKGYDVQYVSNFTDVDDKLIKAANELGEDVPTIADRFVEAYFEDVTALGCKHATVHPRVTENMDIIIEFIQELVNKGYAYESEGDVYFRTKEFEGYGKLSHQPIADLRHGARIEVGEKKQDPLDFALWKAAKEGEIFWESPWGQGRPGWHIECSAMARKYLGDTIDIHAGGQDLAFPHHENEIAQSEALTGKTFARYWMHNGYININNEKMSKSLGNFILVHDIIKQYDPQLIRFFMLSVHYRHPINFSEELLRSTNNGLERIKTAYGNLKHRMESSTDLTDHDEKWLADLKKFQTAFEEAMNDDFNTANAITELYNVANHANQYLLEEHTSTVVIQAYVKQLETLFDILGLELAQEELLDEEIEALIQKRIEARKNRDFALSDQIRDDLKDRNIILEDTAQGTRWKRG.

Cysteine 29 lines the Zn(2+) pocket. Residues proline 31 to asparagine 41 carry the 'HIGH' region motif. Residues cysteine 209, histidine 234, and glutamate 238 each contribute to the Zn(2+) site. The 'KMSKS' region signature appears at lysine 266–serine 270. An ATP-binding site is contributed by lysine 269. A Phosphoserine modification is found at serine 270.

This sequence belongs to the class-I aminoacyl-tRNA synthetase family. Monomer. Zn(2+) serves as cofactor.

It is found in the cytoplasm. It carries out the reaction tRNA(Cys) + L-cysteine + ATP = L-cysteinyl-tRNA(Cys) + AMP + diphosphate. In Bacillus cereus (strain AH187), this protein is Cysteine--tRNA ligase.